Here is a 185-residue protein sequence, read N- to C-terminus: ATP-dependent protease subunit HslV (185 aa).

Thr-2 is a catalytic residue. Positions 157, 160, and 163 each coordinate Na(+).

It belongs to the peptidase T1B family. HslV subfamily. In terms of assembly, a double ring-shaped homohexamer of HslV is capped on each side by a ring-shaped HslU homohexamer. The assembly of the HslU/HslV complex is dependent on binding of ATP.

Its subcellular location is the cytoplasm. It catalyses the reaction ATP-dependent cleavage of peptide bonds with broad specificity.. Its activity is regulated as follows. Allosterically activated by HslU binding. Protease subunit of a proteasome-like degradation complex believed to be a general protein degrading machinery. In Vibrio cholerae serotype O1 (strain ATCC 39315 / El Tor Inaba N16961), this protein is ATP-dependent protease subunit HslV.